The following is a 64-amino-acid chain: Putative neurotoxin 5 (64 aa).

Residues 1-18 (MKNKFAALVITLFVLVLA) form the signal peptide.

This sequence belongs to the scolopendra neurotoxin 6 family. Contains 3 disulfide bonds. Expressed by the venom gland.

Its subcellular location is the secreted. This Scolopendra mutilans (Chinese red-headed centipede) protein is Putative neurotoxin 5.